We begin with the raw amino-acid sequence, 439 residues long: Trigger factor (439 aa).

In terms of domain architecture, PPIase FKBP-type spans 163 to 248 (GDRVTIDYRG…LNKLEAPKLP (86 aa)).

It belongs to the FKBP-type PPIase family. Tig subfamily.

It localises to the cytoplasm. The enzyme catalyses [protein]-peptidylproline (omega=180) = [protein]-peptidylproline (omega=0). In terms of biological role, involved in protein export. Acts as a chaperone by maintaining the newly synthesized protein in an open conformation. Functions as a peptidyl-prolyl cis-trans isomerase. The protein is Trigger factor of Nitrosomonas europaea (strain ATCC 19718 / CIP 103999 / KCTC 2705 / NBRC 14298).